A 513-amino-acid polypeptide reads, in one-letter code: ATP synthase subunit alpha (513 aa).

Residue 169–176 (GDRQTGKT) participates in ATP binding.

The protein belongs to the ATPase alpha/beta chains family. As to quaternary structure, F-type ATPases have 2 components, CF(1) - the catalytic core - and CF(0) - the membrane proton channel. CF(1) has five subunits: alpha(3), beta(3), gamma(1), delta(1), epsilon(1). CF(0) has three main subunits: a(1), b(2) and c(9-12). The alpha and beta chains form an alternating ring which encloses part of the gamma chain. CF(1) is attached to CF(0) by a central stalk formed by the gamma and epsilon chains, while a peripheral stalk is formed by the delta and b chains.

It localises to the cell inner membrane. The catalysed reaction is ATP + H2O + 4 H(+)(in) = ADP + phosphate + 5 H(+)(out). In terms of biological role, produces ATP from ADP in the presence of a proton gradient across the membrane. The alpha chain is a regulatory subunit. The chain is ATP synthase subunit alpha from Actinobacillus pleuropneumoniae serotype 7 (strain AP76).